The primary structure comprises 117 residues: Hydrogenase maturation factor HypA (117 aa).

Ni(2+) is bound at residue His2. Zn(2+)-binding residues include Cys73, Cys76, Cys89, and Cys92.

The protein belongs to the HypA/HybF family.

Functionally, involved in the maturation of [NiFe] hydrogenases. Required for nickel insertion into the metal center of the hydrogenase. This Shewanella baltica (strain OS185) protein is Hydrogenase maturation factor HypA.